The sequence spans 20 residues: Dahlein-5.1 (20 aa).

In terms of tissue distribution, expressed by the skin dorsal glands.

Its subcellular location is the secreted. Has no antimicrobial activity. Strongly inhibits the formation of NO by neuronal nitric oxide synthase at micromolar concentrations. Acts by a non-competitive mechanism, probably by binding to calcium/calmodulin and as a consequence blocking calmodulin attachment to nNOS. The chain is Dahlein-5.1 from Ranoidea dahlii (Dahl's aquatic frog).